A 296-amino-acid polypeptide reads, in one-letter code: Bifunctional protein FolD (296 aa).

Residues 166-168 (GRS), S195, and T236 each bind NADP(+).

It belongs to the tetrahydrofolate dehydrogenase/cyclohydrolase family. As to quaternary structure, homodimer.

The catalysed reaction is (6R)-5,10-methylene-5,6,7,8-tetrahydrofolate + NADP(+) = (6R)-5,10-methenyltetrahydrofolate + NADPH. It catalyses the reaction (6R)-5,10-methenyltetrahydrofolate + H2O = (6R)-10-formyltetrahydrofolate + H(+). It participates in one-carbon metabolism; tetrahydrofolate interconversion. In terms of biological role, catalyzes the oxidation of 5,10-methylenetetrahydrofolate to 5,10-methenyltetrahydrofolate and then the hydrolysis of 5,10-methenyltetrahydrofolate to 10-formyltetrahydrofolate. This Dehalococcoides mccartyi (strain ATCC BAA-2266 / KCTC 15142 / 195) (Dehalococcoides ethenogenes (strain 195)) protein is Bifunctional protein FolD.